The sequence spans 342 residues: Ribosomal RNA small subunit methyltransferase H (342 aa).

Residues 36-38 (GGH), Asp-56, Phe-82, Asp-100, and Gln-107 contribute to the S-adenosyl-L-methionine site. Residues 311–342 (GESGMGKGNSAAASRFPTADSPFPASANGDAA) are disordered.

It belongs to the methyltransferase superfamily. RsmH family.

It is found in the cytoplasm. It catalyses the reaction cytidine(1402) in 16S rRNA + S-adenosyl-L-methionine = N(4)-methylcytidine(1402) in 16S rRNA + S-adenosyl-L-homocysteine + H(+). In terms of biological role, specifically methylates the N4 position of cytidine in position 1402 (C1402) of 16S rRNA. This is Ribosomal RNA small subunit methyltransferase H from Xanthomonas axonopodis pv. citri (strain 306).